A 548-amino-acid polypeptide reads, in one-letter code: Phenylalanine--tRNA ligase beta subunit (548 aa).

In terms of domain architecture, B5 spans 275–350 (LKEDVLETTS…IAYGYNKFSG (76 aa)). Positions 328, 334, 337, and 338 each coordinate Mg(2+).

Belongs to the phenylalanyl-tRNA synthetase beta subunit family. Type 2 subfamily. Tetramer of two alpha and two beta subunits. It depends on Mg(2+) as a cofactor.

Its subcellular location is the cytoplasm. It catalyses the reaction tRNA(Phe) + L-phenylalanine + ATP = L-phenylalanyl-tRNA(Phe) + AMP + diphosphate + H(+). This is Phenylalanine--tRNA ligase beta subunit from Methanocaldococcus jannaschii (strain ATCC 43067 / DSM 2661 / JAL-1 / JCM 10045 / NBRC 100440) (Methanococcus jannaschii).